A 1401-amino-acid polypeptide reads, in one-letter code: DNA-directed RNA polymerase subunit beta (1401 aa).

This sequence belongs to the RNA polymerase beta chain family. The RNAP catalytic core consists of 2 alpha, 1 beta, 1 beta' and 1 omega subunit. When a sigma factor is associated with the core the holoenzyme is formed, which can initiate transcription.

It catalyses the reaction RNA(n) + a ribonucleoside 5'-triphosphate = RNA(n+1) + diphosphate. Functionally, DNA-dependent RNA polymerase catalyzes the transcription of DNA into RNA using the four ribonucleoside triphosphates as substrates. In Zymomonas mobilis subsp. mobilis (strain ATCC 31821 / ZM4 / CP4), this protein is DNA-directed RNA polymerase subunit beta.